The primary structure comprises 298 residues: Tyrosine recombinase XerC (298 aa).

The Core-binding (CB) domain occupies 1–85 (MQQQLDAYCA…AVRGLYHYLN (85 aa)). Residues 106-285 (RLPKTLDTDR…DFQHLAAVYD (180 aa)) enclose the Tyr recombinase domain. Residues Arg146, Lys170, His237, Arg240, and His263 contribute to the active site. Tyr272 (O-(3'-phospho-DNA)-tyrosine intermediate) is an active-site residue.

It belongs to the 'phage' integrase family. XerC subfamily. As to quaternary structure, forms a cyclic heterotetrameric complex composed of two molecules of XerC and two molecules of XerD.

It localises to the cytoplasm. Its function is as follows. Site-specific tyrosine recombinase, which acts by catalyzing the cutting and rejoining of the recombining DNA molecules. The XerC-XerD complex is essential to convert dimers of the bacterial chromosome into monomers to permit their segregation at cell division. It also contributes to the segregational stability of plasmids. This Pseudomonas fluorescens (strain ATCC BAA-477 / NRRL B-23932 / Pf-5) protein is Tyrosine recombinase XerC.